The following is a 254-amino-acid chain: MNPIAFHVGNLAIRWYGVVISIGAALGLLLAMYNCKIREASYDEFINMFLIAFPSAIIGARLYYVIFEFEDYRDNLINIFNIRQGGLAIHGGIIFGVLAVYIYLKYRKESFFEYVDVAAPSIILGQAIGRWGNFFNSEAHGGPVTKEFISKFPQFIQNGMFIEGTYYHPTFLYESIWNFIVCIFLVYLLKKTKKKGIVFMAYIGLYSLGRFFIEGLRTDSLYLGSIRVAQLISVLGIILSIFFIYNIIKKEKRY.

Helical transmembrane passes span L11 to A31, F49 to F69, Q84 to L104, and E109 to G129. R130 contributes to the a 1,2-diacyl-sn-glycero-3-phospho-(1'-sn-glycerol) binding site. 3 helical membrane passes run P169–L189, G196–L216, and V228–I248.

Belongs to the Lgt family.

Its subcellular location is the cell membrane. The enzyme catalyses L-cysteinyl-[prolipoprotein] + a 1,2-diacyl-sn-glycero-3-phospho-(1'-sn-glycerol) = an S-1,2-diacyl-sn-glyceryl-L-cysteinyl-[prolipoprotein] + sn-glycerol 1-phosphate + H(+). Its pathway is protein modification; lipoprotein biosynthesis (diacylglyceryl transfer). Catalyzes the transfer of the diacylglyceryl group from phosphatidylglycerol to the sulfhydryl group of the N-terminal cysteine of a prolipoprotein, the first step in the formation of mature lipoproteins. In Clostridium botulinum (strain Langeland / NCTC 10281 / Type F), this protein is Phosphatidylglycerol--prolipoprotein diacylglyceryl transferase.